A 165-amino-acid chain; its full sequence is MNDNISPIHSPYKAPNTISLVAGKGDTNNPLNAFDMALLDAGICNVNLIKISSIMPPKAEVVPLPDIPMGSLVPTAYGYKTSDIKGETVSAAVSVAIPKDKELCGLIMEYSAIGGKKETEDTVREMAKTGFEMRGWEIDKIISLASECTVENIGCAFAAVALWYK.

At serine 53 the chain carries Pyruvic acid (Ser).

The protein belongs to the PdaD family. Pyruvate is required as a cofactor.

The catalysed reaction is L-arginine + H(+) = agmatine + CO2. The protein is Pyruvoyl-dependent arginine decarboxylase of Methanococcus aeolicus (strain ATCC BAA-1280 / DSM 17508 / OCM 812 / Nankai-3).